The sequence spans 759 residues: Forkhead box protein M1 (759 aa).

The tract at residues 1–92 (MRTSPRRPLI…MRLPSNPPQS (92 aa)) is disordered. Residues 48–63 (LAHELEDMAPKSKADQ) are compositionally biased toward basic and acidic residues. The segment at residues 260 to 358 (RPPYSYMALI…KTASPMSPAD (99 aa)) is a DNA-binding region (fork-head). 3 disordered regions span residues 420-450 (AESSDGQQSSKRVKIAPKATADDGESPKHLG), 516-535 (SANPNQNLTSHPTQNCPSNV), and 596-631 (KEHFSKPTTSSTPSKPTDTGLLQPWESETSLPRDPV). A compositionally biased stretch (low complexity) spans 601 to 612 (KPTTSSTPSKPT).

As to expression, localized to the animal hemisphere of early cleavage stage embryos. During neurulation, expressed in the neural folds. Later, expressed in the spinal cord and in the eye field. During tailbud stages, expression is still restricted to the neuroectoderm, predominantly to the hindbrain, the eye and the spinal cord. With ongoing development, expression is also found at lower levels in the branchial arches. At stage 35, expressed in the rhombencephalon and in the eye retina.

It is found in the nucleus. In terms of biological role, transcription factor regulating the expression of cell cycle genes essential for DNA replication and mitosis. Plays a role in the control of cell proliferation. Also plays a role in DNA break repair, participating in the DNA damage checkpoint response. Promotes transcription of PHB2. The sequence is that of Forkhead box protein M1 from Xenopus laevis (African clawed frog).